We begin with the raw amino-acid sequence, 260 residues long: UPF0246 protein APJL_0596 (260 aa).

This sequence belongs to the UPF0246 family.

This chain is UPF0246 protein APJL_0596, found in Actinobacillus pleuropneumoniae serotype 3 (strain JL03).